Here is a 98-residue protein sequence, read N- to C-terminus: Integration host factor subunit beta (98 aa).

This sequence belongs to the bacterial histone-like protein family. In terms of assembly, heterodimer of an alpha and a beta chain.

This protein is one of the two subunits of integration host factor, a specific DNA-binding protein that functions in genetic recombination as well as in transcriptional and translational control. This is Integration host factor subunit beta from Pseudomonas entomophila (strain L48).